We begin with the raw amino-acid sequence, 331 residues long: Pseudouridylate synthase TRUB2, mitochondrial (331 aa).

Residues 1–10 (MGSAGLSRLH) constitute a mitochondrion transit peptide. Aspartate 98 (nucleophile) is an active-site residue. Residues 296–331 (KSLSPGLDTKQLPSPGWSWDSQGPSSTLGLERGAGQ) are disordered. A compositionally biased stretch (polar residues) spans 314–323 (WDSQGPSSTL).

This sequence belongs to the pseudouridine synthase TruB family. In terms of assembly, forms a regulatory protein-RNA complex, consisting of RCC1L, NGRN, RPUSD3, RPUSD4, TRUB2, FASTKD2 and 16S mt-rRNA.

It is found in the mitochondrion matrix. The enzyme catalyses a uridine in mRNA = a pseudouridine in mRNA. It catalyses the reaction uridine(55) in tRNA = pseudouridine(55) in tRNA. Functionally, minor enzyme contributing to the isomerization of uridine to pseudouridine (pseudouridylation) of specific mitochondrial mRNAs (mt-mRNAs) such as COXI and COXIII mt-mRNAs. As a component of a functional protein-RNA module, consisting of RCC1L, NGRN, RPUSD3, RPUSD4, TRUB2, FASTKD2 and 16S mitochondrial ribosomal RNA (16S mt-rRNA), controls 16S mt-rRNA abundance and is required for intra-mitochondrial translation. Also catalyzes pseudouridylation of some tRNAs, including synthesis of pseudouridine(55) from uracil-55, in the psi GC loop of a subset of tRNAs. This chain is Pseudouridylate synthase TRUB2, mitochondrial, found in Homo sapiens (Human).